Reading from the N-terminus, the 365-residue chain is 2-aminoethylphosphonate--pyruvate transaminase (365 aa).

Lys-194 is subject to N6-(pyridoxal phosphate)lysine.

Belongs to the class-V pyridoxal-phosphate-dependent aminotransferase family. PhnW subfamily. As to quaternary structure, homodimer. Pyridoxal 5'-phosphate is required as a cofactor.

It catalyses the reaction (2-aminoethyl)phosphonate + pyruvate = phosphonoacetaldehyde + L-alanine. Functionally, involved in phosphonate degradation. The chain is 2-aminoethylphosphonate--pyruvate transaminase from Bacillus cereus (strain 03BB102).